Reading from the N-terminus, the 399-residue chain is S-adenosylmethionine synthase (399 aa).

H17 contributes to the ATP binding site. D19 is a binding site for Mg(2+). A K(+)-binding site is contributed by E45. L-methionine is bound by residues E58 and Q101. Residues 101–111 (QSADIAMGVDQ) form a flexible loop region. ATP is bound by residues 177–179 (DGK), 244–245 (RF), D253, 259–260 (RK), A276, and K280. D253 lines the L-methionine pocket. K284 contributes to the L-methionine binding site.

The protein belongs to the AdoMet synthase family. Homotetramer; dimer of dimers. The cofactor is Mg(2+). K(+) serves as cofactor.

The protein localises to the cytoplasm. The enzyme catalyses L-methionine + ATP + H2O = S-adenosyl-L-methionine + phosphate + diphosphate. It participates in amino-acid biosynthesis; S-adenosyl-L-methionine biosynthesis; S-adenosyl-L-methionine from L-methionine: step 1/1. Functionally, catalyzes the formation of S-adenosylmethionine (AdoMet) from methionine and ATP. The overall synthetic reaction is composed of two sequential steps, AdoMet formation and the subsequent tripolyphosphate hydrolysis which occurs prior to release of AdoMet from the enzyme. This Bacillus cereus (strain G9842) protein is S-adenosylmethionine synthase.